The sequence spans 120 residues: Transmembrane protein 010R (120 aa).

2 helical membrane-spanning segments follow: residues 40–60 (FCGA…ATAT) and 72–92 (SIFF…VWFL).

Belongs to the IIV-6 010R family.

The protein resides in the membrane. The polypeptide is Transmembrane protein 010R (Invertebrate iridescent virus 6 (IIV-6)).